A 497-amino-acid chain; its full sequence is uncharacterized protein (497 aa).

Residues D12, T13, and C52 each contribute to the Ca(2+) site. Residue C52 is the Nucleophile of the active site. The residue at position 52 (C52) is a 3-oxoalanine (Cys). H102 is a catalytic residue. D284 and H285 together coordinate Ca(2+).

It belongs to the sulfatase family. The cofactor is Ca(2+). The conversion to 3-oxoalanine (also known as C-formylglycine, FGly), of a serine or cysteine residue in prokaryotes and of a cysteine residue in eukaryotes, is critical for catalytic activity.

This is an uncharacterized protein from Escherichia coli (strain K12).